The sequence spans 299 residues: N-acetylmuramic acid 6-phosphate etherase (299 aa).

The 164-residue stretch at 55-218 folds into the SIS domain; it reads CINCLEKNGR…STTVMVKMGK (164 aa). The active-site Proton donor is glutamate 83. Glutamate 114 is an active-site residue.

This sequence belongs to the GCKR-like family. MurNAc-6-P etherase subfamily. As to quaternary structure, homodimer.

It catalyses the reaction N-acetyl-D-muramate 6-phosphate + H2O = N-acetyl-D-glucosamine 6-phosphate + (R)-lactate. It participates in amino-sugar metabolism; N-acetylmuramate degradation. Its function is as follows. Specifically catalyzes the cleavage of the D-lactyl ether substituent of MurNAc 6-phosphate, producing GlcNAc 6-phosphate and D-lactate. This is N-acetylmuramic acid 6-phosphate etherase from Pseudothermotoga lettingae (strain ATCC BAA-301 / DSM 14385 / NBRC 107922 / TMO) (Thermotoga lettingae).